The primary structure comprises 21 residues: Nitrilase (21 aa).

This sequence belongs to the carbon-nitrogen hydrolase superfamily. Nitrilase family.

It catalyses the reaction a nitrile + 2 H2O = a carboxylate + NH4(+). Functionally, acts on many kinds of nitrile compounds such as aliphatic, aromatic, and heterocyclic mononitriles or dinitriles. Prefers S-(-)-2-(4'-isobutylphenyl)-propionitrile to R-(+)-2-(4'-isobutylphenyl)-propionitrile as the substrate. The protein is Nitrilase of Acinetobacter sp. (strain AK226).